A 405-amino-acid chain; its full sequence is Acetate kinase (405 aa).

N7 lines the Mg(2+) pocket. K14 provides a ligand contact to ATP. R92 provides a ligand contact to substrate. D149 (proton donor/acceptor) is an active-site residue. Residues 209–213 (HLGNG) and 284–286 (DMR) contribute to the ATP site. E389 is a Mg(2+) binding site.

This sequence belongs to the acetokinase family. In terms of assembly, homodimer. Mg(2+) is required as a cofactor. Mn(2+) serves as cofactor.

It localises to the cytoplasm. The enzyme catalyses acetate + ATP = acetyl phosphate + ADP. It participates in metabolic intermediate biosynthesis; acetyl-CoA biosynthesis; acetyl-CoA from acetate: step 1/2. In terms of biological role, catalyzes the formation of acetyl phosphate from acetate and ATP. Can also catalyze the reverse reaction. The protein is Acetate kinase of Borreliella burgdorferi (strain ZS7) (Borrelia burgdorferi).